Consider the following 114-residue polypeptide: Large ribosomal subunit protein uL24 (114 aa).

It belongs to the universal ribosomal protein uL24 family. As to quaternary structure, part of the 50S ribosomal subunit.

One of two assembly initiator proteins, it binds directly to the 5'-end of the 23S rRNA, where it nucleates assembly of the 50S subunit. Functionally, one of the proteins that surrounds the polypeptide exit tunnel on the outside of the subunit. The chain is Large ribosomal subunit protein uL24 from Thermomicrobium roseum (strain ATCC 27502 / DSM 5159 / P-2).